Consider the following 668-residue polypeptide: Acyl-CoA-binding domain-containing protein 4 (668 aa).

Residues 12-106 enclose the ACB domain; it reads YPERFYAAAS…LEEDDPGWYS (95 aa). Residues Lys-33, 48 to 52, and Lys-74 contribute to the an acyl-CoA site; that span reads YALYQ. Kelch repeat units lie at residues 195-242, 255-305, 307-356, 358-407, 408-456, and 463-508; these read KMYI…TLLA, KLLS…MVGK, LVIF…VHAE, FLLI…TIGE, NWFI…LVVS, and VLVA…VNNA. Phosphoserine is present on residues Ser-515 and Ser-520. Residues 538–647 are a coiled coil; that stretch reads KVEGNSERII…EQAAMNAKRQ (110 aa). The segment at 639–668 is disordered; sequence QAAMNAKRQGSGGVWGWLAGSPQEKDDDSP.

This sequence belongs to the ACBP family. As to quaternary structure, interacts with RAP2-3/EBP, an ethylene-responsive element binding protein. As to expression, mostly expressed in roots, stems, and leaves, and, to a lower extent, in flowers and siliques.

The protein resides in the cytoplasm. Functionally, binds medium- and long-chain acyl-CoA esters with very high affinity. Can interact in vitro with oleoyl-CoA, barely with palmitoyl-CoA, but not with arachidonyl-CoA. May function as an intracellular carrier of acyl-CoA esters. Plays a role in the biosynthesis of membrane lipids including galactolipids and phospholipids. In Arabidopsis thaliana (Mouse-ear cress), this protein is Acyl-CoA-binding domain-containing protein 4 (ACBP4).